The following is a 257-amino-acid chain: Nuclear receptor subfamily 0 group B member 2 (257 aa).

The 242-residue stretch at 16–257 (SRPAILYALL…GLLGDMLLLR (242 aa)) folds into the NR LBD domain. Arg57 is subject to Symmetric dimethylarginine; by PRMT5.

It belongs to the nuclear hormone receptor family. NR0 subfamily. Interacts (via N-terminus) with NEUROD1 (via N-terminus and C-terminus). Interacts with ID2. Interacts with RORG, NFIL3, NR1D1 and BHLHE41. Heterodimer; efficient DNA binding requires dimerization with another bHLH protein. Interacts with RARA, RXRA, THRB, NR5A1, NR5A2, NR1I3, PPARA, PPARG and EID1. Interacts with HNF4A; the resulting heterodimer is transcriptionally inactive. Interacts with DDX3X; this interaction disrupts the interaction between HNF4 and NR0B2/SHP that forms inactive heterodimers and enhances the formation of active HNF4 homodimers. Post-translationally, arginine methylation by PRMT5 enhances repression activity of metabolic genes in liver in response to bile acid signaling, by increasing interaction with cofactors. As to expression, liver. Low levels of expression were detected in heart and pancreas.

It localises to the nucleus. Its subcellular location is the cytoplasm. In terms of biological role, transcriptional regulator that acts as a negative regulator of receptor-dependent signaling pathways. Specifically inhibits transactivation of the nuclear receptor with which it interacts. Inhibits transcriptional activity of NEUROD1 on E-box-containing promoter by interfering with the coactivation function of the p300/CBP-mediated transcription complex for NEUROD1. Essential component of the liver circadian clock which via its interaction with NR1D1 and RORG regulates NPAS2-mediated hepatic lipid metabolism. Regulates the circadian expression of cytochrome P450 (CYP) enzymes. Represses: NR5A2 and HNF4A to down-regulate CYP2C38, NFLI3 to up-regulate CYP2A5, BHLHE41/HNF1A axis to up-regulate CYP1A2, CYP2E1 and CYP3A11, and NR1D1 to up-regulate CYP2B10, CYP4A10 and CYP4A14. The protein is Nuclear receptor subfamily 0 group B member 2 (NR0B2) of Homo sapiens (Human).